We begin with the raw amino-acid sequence, 660 residues long: MEVSGPEDDPFLSQLHQVQCPVCQQMMPAAHINSHLDRCLLLHPAGHAEPAAGPHRAGERAKGPSPPGAKRRRLSESSALKQPATPTAAESSEGEGEEGDDGGETESRESYDAPPTPSGARLIPDFPVARSSSPARKGLGKRPAAAAAAGSASPRSWDETEAQEEEEAGVDGDGDADVDGEDDPGHWDADAADASFGVSAGRAHPRALPAEEIRQMLEGKPLADKMRPDTLQDYIGQSRAVGQETLLRSLLETNEIPSLILWGPPGCGKTTLAHIIANNSKKHSIRFVTLSATNAKTNDVRDVIKQAQNEKSFFKRKTILFIDEIHRFNKSQQDTFLPHVECGTITLIGATTENPSFQVNTALLSRCRVIVLEKLPVEAMVTILMRAINSLGIHVLDSSRPTDPLSHSSNCSSEPSVFIEDKAVDTLAYLSDGDARTGLNGLQLAVLARLSSRKMFCKKSGQTYSPSRVLITENDVKEGLQRSHILYDRAGEEHYNCISALHKAMRGSDQNASLYWLARMLEGGEDPLYVARRLVRFASEDIGLADPSALAQAVAAYQGCHFIGMPECEVLLAQCVVYFARAPKSIEVYSAYNNVKACLRSHQGPLPPVPLHLRNAPTRLMKDLGYGKGYKYNPMYSEPVDQDYLPEELRGVDFFKQRRC.

A UBZ4-type zinc finger spans residues 17-44; that stretch reads QVQCPVCQQMMPAAHINSHLDRCLLLHP. Residues Cys20, Cys23, His31, His35, and Cys39 each coordinate Zn(2+). The segment at 50-191 is disordered; sequence PAAGPHRAGE…DDPGHWDADA (142 aa). A phosphoserine mark is found at Ser65 and Ser75. Over residues 76–89 the composition is skewed to polar residues; that stretch reads ESSALKQPATPTAA. Residue Lys81 forms a Glycyl lysine isopeptide (Lys-Gly) (interchain with G-Cter in ubiquitin) linkage. Thr85 is subject to Phosphothreonine. Phosphoserine occurs at positions 91 and 92. Acidic residues predominate over residues 92–104; it reads SEGEGEEGDDGGE. Residue Thr116 is modified to Phosphothreonine. The segment covering 135–155 has biased composition (low complexity); it reads ARKGLGKRPAAAAAAGSASPR. Lys141 participates in a covalent cross-link: Glycyl lysine isopeptide (Lys-Gly) (interchain with G-Cter in ubiquitin). Phosphoserine is present on Ser153. Residues 159–182 show a composition bias toward acidic residues; sequence ETEAQEEEEAGVDGDGDADVDGED. A Glycyl lysine isopeptide (Lys-Gly) (interchain with G-Cter in ubiquitin) cross-link involves residue Lys220. Residue 265–271 coordinates ATP; sequence PGCGKTT. Residues Lys296, Lys305, Lys311, Lys317, and Lys330 each participate in a glycyl lysine isopeptide (Lys-Gly) (interchain with G-Cter in ubiquitin) cross-link. Residue Lys477 forms a Glycyl lysine isopeptide (Lys-Gly) (interchain with G-Cter in SUMO2); alternate linkage. Lys477 participates in a covalent cross-link: Glycyl lysine isopeptide (Lys-Gly) (interchain with G-Cter in ubiquitin); alternate. A phosphotyrosine mark is found at Tyr529 and Tyr557. Lys622 is covalently cross-linked (Glycyl lysine isopeptide (Lys-Gly) (interchain with G-Cter in ubiquitin)). Lys628 is covalently cross-linked (Glycyl lysine isopeptide (Lys-Gly) (interchain with G-Cter in ubiquitin); alternate). The residue at position 628 (Lys628) is an N6-acetyllysine; alternate. Lys631 participates in a covalent cross-link: Glycyl lysine isopeptide (Lys-Gly) (interchain with G-Cter in ubiquitin).

The protein belongs to the AAA ATPase family. RarA/MGS1/WRNIP1 subfamily. As to quaternary structure, forms homooligomers, possibly octamers. Directly interacts with POLD1, POLD2 and POLD4. Interacts with the N-terminal domain of WRN. Interacts (via UBZ4-type zinc finger) with monoubiquitin and polyubiquitin. Interacts with TRIM14 and PPP6C; these interactions positively regulate the RIGI signaling pathway. In terms of processing, sumoylated with SUMO1 and SUMO2/3. In terms of tissue distribution, ubiquitously expressed.

The protein localises to the nucleus. The protein resides in the cytoplasm. It carries out the reaction ATP + H2O = ADP + phosphate + H(+). Functions as a modulator of initiation or reinitiation events during DNA polymerase delta-mediated DNA synthesis. In the presence of ATP, stimulation of DNA polymerase delta-mediated DNA synthesis is decreased. Also plays a role in the innate immune defense against viruses. Stabilizes the RIGI dsRNA interaction and promotes RIGI 'Lys-63'-linked polyubiquitination. In turn, RIGI transmits the signal through mitochondrial MAVS. In Rattus norvegicus (Rat), this protein is ATPase WRNIP1.